A 149-amino-acid chain; its full sequence is Large ribosomal subunit protein uL13 (149 aa).

This sequence belongs to the universal ribosomal protein uL13 family. Part of the 50S ribosomal subunit.

Its function is as follows. This protein is one of the early assembly proteins of the 50S ribosomal subunit, although it is not seen to bind rRNA by itself. It is important during the early stages of 50S assembly. The polypeptide is Large ribosomal subunit protein uL13 (Bifidobacterium longum subsp. infantis (strain ATCC 15697 / DSM 20088 / JCM 1222 / NCTC 11817 / S12)).